Consider the following 433-residue polypeptide: Serine/threonine-protein kinase Sgk1 (433 aa).

Positions 66–92 (QDVELMNSNPSPPPSPSQQINLGPSSN) are disordered. Over residues 83 to 92 (QQINLGPSSN) the composition is skewed to polar residues. Residues 100–357 (FDFLKVIGKG…FTEIKNHMFF (258 aa)) form the Protein kinase domain. ATP is bound by residues 106–114 (IGKGSFGKV) and K129. D224 functions as the Proton acceptor in the catalytic mechanism. Positions 358–433 (SPINWDDLNA…SYAPAMDSYL (76 aa)) constitute an AGC-kinase C-terminal domain.

This sequence belongs to the protein kinase superfamily. AGC Ser/Thr protein kinase family.

It localises to the cytoplasm. It is found in the nucleus. The protein resides in the endoplasmic reticulum. It catalyses the reaction L-seryl-[protein] + ATP = O-phospho-L-seryl-[protein] + ADP + H(+). The enzyme catalyses L-threonyl-[protein] + ATP = O-phospho-L-threonyl-[protein] + ADP + H(+). In terms of biological role, protein kinase that may play an important role in cellular stress response. May be involved in the regulation of processes such as cell survival, neuronal excitability and renal sodium excretion. This chain is Serine/threonine-protein kinase Sgk1 (sgk1), found in Danio rerio (Zebrafish).